A 255-amino-acid polypeptide reads, in one-letter code: Imidazole glycerol phosphate synthase subunit HisF (255 aa).

Residues aspartate 12 and aspartate 131 contribute to the active site.

The protein belongs to the HisA/HisF family. As to quaternary structure, heterodimer of HisH and HisF.

It localises to the cytoplasm. The catalysed reaction is 5-[(5-phospho-1-deoxy-D-ribulos-1-ylimino)methylamino]-1-(5-phospho-beta-D-ribosyl)imidazole-4-carboxamide + L-glutamine = D-erythro-1-(imidazol-4-yl)glycerol 3-phosphate + 5-amino-1-(5-phospho-beta-D-ribosyl)imidazole-4-carboxamide + L-glutamate + H(+). It functions in the pathway amino-acid biosynthesis; L-histidine biosynthesis; L-histidine from 5-phospho-alpha-D-ribose 1-diphosphate: step 5/9. Its function is as follows. IGPS catalyzes the conversion of PRFAR and glutamine to IGP, AICAR and glutamate. The HisF subunit catalyzes the cyclization activity that produces IGP and AICAR from PRFAR using the ammonia provided by the HisH subunit. This chain is Imidazole glycerol phosphate synthase subunit HisF, found in Ignicoccus hospitalis (strain KIN4/I / DSM 18386 / JCM 14125).